Here is a 473-residue protein sequence, read N- to C-terminus: MSSTDAEAKNEEAVDWEGPDDPENPRNWNQGAKMTHVLLVSSFTLYSNLAAVMFAPGAQDLVAEFGITSTIVASLTVSIYILGYVFGPFLLASMSEIYGRLIIYHICNAVYIAFTIGCALSTDTAMFLVFRFICGCAASAPMAIGGGTIADLHKPEERGKAMALFGLGPLLGPVIGPVVGGFVTQFLGWRWTFWLVLILAGVVSLLALVLMRETFEPVLLTRKAAELRKSTGNYRLQARTYNKDLTPAQLLARATIRPTKMLLMSPIVFLLSVYCAFMFGLTYLLFTTFPAVFEETYGFAADVSGLAYLGLGVGMIISIGLFAVLSDKLLHQPHGGTIARPELRLILMIWSSPLVPIGFFWYGWSAKYEVHWIVPILGTSVIGLGAFLILMPAQLYLVDAFGTEAAASALAANTVLRSLFGAVLPLAGPSLYDSLGLGWGNSLLAFIGLAFAPVPFFFYKYGERLRVRFPVNS.

Basic and acidic residues predominate over residues M1–E12. The tract at residues M1–N27 is disordered. Over residues A13–P22 the composition is skewed to acidic residues. Transmembrane regions (helical) follow at residues V37 to G57, I71 to L91, L101 to S121, A125 to G145, A163 to V183, W191 to M211, P266 to F286, G305 to L325, L345 to S365, W372 to P392, and A409 to P429.

It belongs to the major facilitator superfamily.

The protein localises to the cell membrane. In terms of biological role, efflux pump that might be required for efficient secretion of pyrrolocin or other secondary metabolies produced by the pyrrolocin gene cluster. This chain is MFS transporter prlG, found in Fungal sp. (strain NRRL 50135).